Reading from the N-terminus, the 134-residue chain is Complexin-1 (134 aa).

2 disordered regions span residues 1–60 (MEFV…AERE) and 74–113 (KKEE…EEED). A compositionally biased stretch (basic and acidic residues) spans 15–60 (DMGKMLGGDEEKDPDAAKKEEERQEALRQAEEERKAKYAKMEAERE). A coiled-coil region spans residues 29–69 (DAAKKEEERQEALRQAEEERKAKYAKMEAEREAVRQGIRDK). An interaction with the SNARE complex region spans residues 48–70 (RKAKYAKMEAEREAVRQGIRDKY).

It belongs to the complexin/synaphin family. As to quaternary structure, binds to the SNARE core complex containing SNAP25, VAMP2 and STX1A. As to expression, nervous system. In hippocampus and cerebellum, expressed mainly by inhibitory neurons. Overexpressed in substantia nigra from patients with Parkinson disease.

The protein resides in the cytoplasm. It is found in the cytosol. The protein localises to the perikaryon. Its subcellular location is the presynapse. Functionally, positively regulates a late step in exocytosis of various cytoplasmic vesicles, such as synaptic vesicles and other secretory vesicles. Organizes the SNAREs into a cross-linked zigzag topology that, when interposed between the vesicle and plasma membranes, is incompatible with fusion, thereby preventing SNAREs from releasing neurotransmitters until an action potential arrives at the synapse. Also involved in glucose-induced secretion of insulin by pancreatic beta-cells. Essential for motor behavior. The polypeptide is Complexin-1 (CPLX1) (Homo sapiens (Human)).